The following is a 365-amino-acid chain: UDP-N-acetylglucosamine--N-acetylmuramyl-(pentapeptide) pyrophosphoryl-undecaprenol N-acetylglucosamine transferase (365 aa).

Residues 19–21, asparagine 131, arginine 170, serine 201, isoleucine 255, 274–279, and glutamine 300 each bind UDP-N-acetyl-alpha-D-glucosamine; these read TGG and ALTVTE.

The protein belongs to the glycosyltransferase 28 family. MurG subfamily.

Its subcellular location is the cell inner membrane. It catalyses the reaction di-trans,octa-cis-undecaprenyl diphospho-N-acetyl-alpha-D-muramoyl-L-alanyl-D-glutamyl-meso-2,6-diaminopimeloyl-D-alanyl-D-alanine + UDP-N-acetyl-alpha-D-glucosamine = di-trans,octa-cis-undecaprenyl diphospho-[N-acetyl-alpha-D-glucosaminyl-(1-&gt;4)]-N-acetyl-alpha-D-muramoyl-L-alanyl-D-glutamyl-meso-2,6-diaminopimeloyl-D-alanyl-D-alanine + UDP + H(+). It participates in cell wall biogenesis; peptidoglycan biosynthesis. Functionally, cell wall formation. Catalyzes the transfer of a GlcNAc subunit on undecaprenyl-pyrophosphoryl-MurNAc-pentapeptide (lipid intermediate I) to form undecaprenyl-pyrophosphoryl-MurNAc-(pentapeptide)GlcNAc (lipid intermediate II). This is UDP-N-acetylglucosamine--N-acetylmuramyl-(pentapeptide) pyrophosphoryl-undecaprenol N-acetylglucosamine transferase from Acinetobacter baumannii (strain SDF).